The following is a 421-amino-acid chain: D-inositol 3-phosphate glycosyltransferase (421 aa).

1D-myo-inositol 3-phosphate is bound at residue histidine 9. UDP-N-acetyl-alpha-D-glucosamine-binding positions include 15–16 (QP) and glycine 23. 1D-myo-inositol 3-phosphate is bound by residues 20-25 (DAGGMN), lysine 78, tyrosine 110, threonine 134, and arginine 154. UDP-N-acetyl-alpha-D-glucosamine contacts are provided by arginine 231, lysine 236, and arginine 294. Mg(2+) is bound by residues tyrosine 303, glutamine 304, and alanine 306. Positions 316 and 324 each coordinate UDP-N-acetyl-alpha-D-glucosamine. Threonine 330 is a binding site for Mg(2+).

Belongs to the glycosyltransferase group 1 family. MshA subfamily. In terms of assembly, homodimer.

It carries out the reaction 1D-myo-inositol 3-phosphate + UDP-N-acetyl-alpha-D-glucosamine = 1D-myo-inositol 2-acetamido-2-deoxy-alpha-D-glucopyranoside 3-phosphate + UDP + H(+). Catalyzes the transfer of a N-acetyl-glucosamine moiety to 1D-myo-inositol 3-phosphate to produce 1D-myo-inositol 2-acetamido-2-deoxy-glucopyranoside 3-phosphate in the mycothiol biosynthesis pathway. This chain is D-inositol 3-phosphate glycosyltransferase, found in Corynebacterium aurimucosum (strain ATCC 700975 / DSM 44827 / CIP 107346 / CN-1) (Corynebacterium nigricans).